The primary structure comprises 425 residues: UPF0761 membrane protein XC_3370 (425 aa).

Helical transmembrane passes span valine 48–phenylalanine 68, phenylalanine 105–glutamate 125, glycine 154–phenylalanine 174, leucine 182–isoleucine 202, alanine 216–phenylalanine 236, and alanine 250–leucine 270.

This sequence belongs to the UPF0761 family.

Its subcellular location is the cell inner membrane. This is UPF0761 membrane protein XC_3370 from Xanthomonas campestris pv. campestris (strain 8004).